The primary structure comprises 338 residues: Arginase, mitochondrial (338 aa).

A mitochondrion-targeting transit peptide spans 1-15 (MSTIARRGFHYMQRL). Residues Ser73 and 92 to 95 (DSTN) contribute to the L-ornithine site. Mn(2+)-binding residues include His157, Asp181, His183, and Asp185. 185 to 187 (DLY) contacts L-ornithine. 191–193 (EGN) serves as a coordination point for substrate. An L-ornithine-binding site is contributed by Ser220. The Mn(2+) site is built by Asp266 and Asp268. Glu309 is a binding site for substrate.

It belongs to the arginase family. As to quaternary structure, forms homohexamers. Mn(2+) is required as a cofactor.

Its subcellular location is the mitochondrion. It catalyses the reaction L-arginine + H2O = urea + L-ornithine. The catalysed reaction is agmatine + H2O = urea + putrescine. Its pathway is nitrogen metabolism; urea cycle; L-ornithine and urea from L-arginine: step 1/1. The protein operates within amine and polyamine biosynthesis; putrescine biosynthesis via agmatine pathway; putrescine from agmatine: step 1/1. Its function is as follows. Catalyzes the hydrolysis of L-arginine to urea and L-ornithine. The latter can be utilized in the urea cycle or as a precursor for the synthesis of both polyamines and proline. Possesses agmatinase activity. Catalyzes the formation of putrescine from agmatine. This Medicago truncatula (Barrel medic) protein is Arginase, mitochondrial.